A 363-amino-acid chain; its full sequence is Aminomethyltransferase (363 aa).

The protein belongs to the GcvT family. The glycine cleavage system is composed of four proteins: P, T, L and H.

It catalyses the reaction N(6)-[(R)-S(8)-aminomethyldihydrolipoyl]-L-lysyl-[protein] + (6S)-5,6,7,8-tetrahydrofolate = N(6)-[(R)-dihydrolipoyl]-L-lysyl-[protein] + (6R)-5,10-methylene-5,6,7,8-tetrahydrofolate + NH4(+). The glycine cleavage system catalyzes the degradation of glycine. This Staphylococcus epidermidis (strain ATCC 35984 / DSM 28319 / BCRC 17069 / CCUG 31568 / BM 3577 / RP62A) protein is Aminomethyltransferase.